We begin with the raw amino-acid sequence, 113 residues long: UPF0251 protein TK0562 (113 aa).

Belongs to the UPF0251 family.

This is UPF0251 protein TK0562 from Thermococcus kodakarensis (strain ATCC BAA-918 / JCM 12380 / KOD1) (Pyrococcus kodakaraensis (strain KOD1)).